The primary structure comprises 156 residues: NADH-ubiquinone oxidoreductase 20 kDa subunit (156 aa).

Positions 33, 34, 98, and 128 each coordinate [4Fe-4S] cluster.

The protein belongs to the complex I 20 kDa subunit family. The cofactor is [4Fe-4S] cluster.

The protein localises to the mitochondrion. It carries out the reaction a ubiquinone + NADH + 5 H(+)(in) = a ubiquinol + NAD(+) + 4 H(+)(out). The protein is NADH-ubiquinone oxidoreductase 20 kDa subunit (NAD10) of Paramecium tetraurelia.